Here is a 187-residue protein sequence, read N- to C-terminus: Threonylcarbamoyl-AMP synthase (187 aa).

The YrdC-like domain maps to 3-187 (QVTPSQISGI…IQTGHIFRQG (185 aa)).

It belongs to the SUA5 family. TsaC subfamily.

It localises to the cytoplasm. It catalyses the reaction L-threonine + hydrogencarbonate + ATP = L-threonylcarbamoyladenylate + diphosphate + H2O. Required for the formation of a threonylcarbamoyl group on adenosine at position 37 (t(6)A37) in tRNAs that read codons beginning with adenine. Catalyzes the conversion of L-threonine, HCO(3)(-)/CO(2) and ATP to give threonylcarbamoyl-AMP (TC-AMP) as the acyladenylate intermediate, with the release of diphosphate. This is Threonylcarbamoyl-AMP synthase from Shewanella amazonensis (strain ATCC BAA-1098 / SB2B).